The following is a 218-amino-acid chain: Octanoyltransferase (218 aa).

Residues 45 to 218 form the BPL/LPL catalytic domain; the sequence is AGTADELWLL…TDALQRAIYS (174 aa). Residues 84–91, 151–153, and 164–166 each bind substrate; these read RGGQITYH, ALG, and GLA. The active-site Acyl-thioester intermediate is Cys182.

The protein belongs to the LipB family.

The protein localises to the cytoplasm. The enzyme catalyses octanoyl-[ACP] + L-lysyl-[protein] = N(6)-octanoyl-L-lysyl-[protein] + holo-[ACP] + H(+). It participates in protein modification; protein lipoylation via endogenous pathway; protein N(6)-(lipoyl)lysine from octanoyl-[acyl-carrier-protein]: step 1/2. Catalyzes the transfer of endogenously produced octanoic acid from octanoyl-acyl-carrier-protein onto the lipoyl domains of lipoate-dependent enzymes. Lipoyl-ACP can also act as a substrate although octanoyl-ACP is likely to be the physiological substrate. The polypeptide is Octanoyltransferase (Thiobacillus denitrificans (strain ATCC 25259 / T1)).